We begin with the raw amino-acid sequence, 211 residues long: Ribosomal RNA small subunit methyltransferase G (211 aa).

S-adenosyl-L-methionine-binding positions include G79, L84, 130 to 131 (VE), and R145.

Belongs to the methyltransferase superfamily. RNA methyltransferase RsmG family.

It is found in the cytoplasm. The enzyme catalyses guanosine(527) in 16S rRNA + S-adenosyl-L-methionine = N(7)-methylguanosine(527) in 16S rRNA + S-adenosyl-L-homocysteine. Functionally, specifically methylates the N7 position of guanine in position 527 of 16S rRNA. The chain is Ribosomal RNA small subunit methyltransferase G from Alteromonas mediterranea (strain DSM 17117 / CIP 110805 / LMG 28347 / Deep ecotype).